We begin with the raw amino-acid sequence, 74 residues long: Putative protein YozX (74 aa).

The polypeptide is Putative protein YozX (yozX) (Bacillus subtilis (strain 168)).